We begin with the raw amino-acid sequence, 432 residues long: MRVVILGSGVVGVASAWYLNQAGHEVTVIDREPGAALETSAANAGQISPGYAAPWAAPGVPLKAIKWMFQRHAPLAVRLDGTQFQLKWMWQMLRNCDTSHYMENKGRMVRLAEYSRDCLKALRAETNIQYEGRQGGTLQLFRTEQQYENATRDIVVLEDAGVPYQLLESSRLAEVEPALAEVAHKLTGGLQLPNDETGDCQLFTQNLARMAEQAGVKFRFNTPVDQLLCDGEQIYGVKCGDEVIKADAYVMAFGSYSTAMLKGIVDIPVYPLKGYSLTIPIAQEDGAPVSTILDETYKIAITRFDNRIRVGGMAEIVGFNTELLQPRRETLEMVVRDLYPRGGHVEQATFWTGLRPMTPDGTPVVGRTRFKNLWLNTGHGTLGWTMACGSGQLLSDLLSGRTPAIPYEDLSVARYSRGFTPSRPGHLHGAHS.

3–17 is a binding site for FAD; sequence VVILGSGVVGVASAW.

The protein belongs to the DadA oxidoreductase family. FAD serves as cofactor.

It catalyses the reaction a D-alpha-amino acid + A + H2O = a 2-oxocarboxylate + AH2 + NH4(+). It functions in the pathway amino-acid degradation; D-alanine degradation; NH(3) and pyruvate from D-alanine: step 1/1. Oxidative deamination of D-amino acids. The protein is D-amino acid dehydrogenase of Shigella boydii serotype 18 (strain CDC 3083-94 / BS512).